The primary structure comprises 505 residues: Cytochrome c oxidase subunit 1 (505 aa).

Residues 14-34 form a helical membrane-spanning segment; sequence LLYLVFAFFGGLLGTSLSMLI. Positions 37 and 42 each coordinate Ca(2+). Transmembrane regions (helical) follow at residues 55-75, 98-118, 143-163, 180-200, 229-249, and 261-281; these read VIIT…ALFG, NISF…TLVE, AILS…NMLV, LFVW…PVLA, LFWF…FGIV, and VFGL…GFIV. His60 contacts Fe(II)-heme a. 2 residues coordinate Cu cation: His235 and Tyr239. The 1'-histidyl-3'-tyrosine (His-Tyr) cross-link spans 235–239; that stretch reads HPEVY. An O2-binding site is contributed by Tyr239. Residues His284 and His285 each contribute to the Cu cation site. Transmembrane regions (helical) follow at residues 302-322 and 332-352; these read ATMI…ATIY and MWFA…GVVL. Mg(2+)-binding residues include His362 and Asp363. His370 serves as a coordination point for heme a3. His372 contributes to the Fe(II)-heme a binding site. The next 3 membrane-spanning stretches (helical) occupy residues 374-394, 408-428, and 446-466; these read VLSM…GNLI, FWLL…LGLA, and AVSS…ATTF.

Belongs to the heme-copper respiratory oxidase family. In terms of assembly, component of the cytochrome c oxidase (complex IV, CIV), a multisubunit enzyme composed of a catalytic core of 3 subunits and several supernumerary subunits. The complex exists as a monomer or a dimer and forms supercomplexes (SCs) in the inner mitochondrial membrane with ubiquinol-cytochrome c oxidoreductase (cytochrome b-c1 complex, complex III, CIII). The cofactor is heme. Cu cation serves as cofactor.

Its subcellular location is the mitochondrion inner membrane. It carries out the reaction 4 Fe(II)-[cytochrome c] + O2 + 8 H(+)(in) = 4 Fe(III)-[cytochrome c] + 2 H2O + 4 H(+)(out). It participates in energy metabolism; oxidative phosphorylation. Its function is as follows. Component of the cytochrome c oxidase, the last enzyme in the mitochondrial electron transport chain which drives oxidative phosphorylation. The respiratory chain contains 3 multisubunit complexes succinate dehydrogenase (complex II, CII), ubiquinol-cytochrome c oxidoreductase (cytochrome b-c1 complex, complex III, CIII) and cytochrome c oxidase (complex IV, CIV), that cooperate to transfer electrons derived from NADH and succinate to molecular oxygen, creating an electrochemical gradient over the inner membrane that drives transmembrane transport and the ATP synthase. Cytochrome c oxidase is the component of the respiratory chain that catalyzes the reduction of oxygen to water. Electrons originating from reduced cytochrome c in the intermembrane space (IMS) are transferred via the dinuclear copper A center (CU(A)) of subunit 2 and heme A of subunit 1 to the active site in subunit 1, a binuclear center (BNC) formed by heme A3 and copper B (CU(B)). The BNC reduces molecular oxygen to 2 water molecules using 4 electrons from cytochrome c in the IMS and 4 protons from the mitochondrial matrix. The protein is Cytochrome c oxidase subunit 1 (COX1) of Chlamydomonas reinhardtii (Chlamydomonas smithii).